A 222-amino-acid chain; its full sequence is CEACAM1-like protein UL7 (222 aa).

Residues Asn50, Asn56, Asn60, Asn71, Asn105, Asn109, Asn125, Asn132, Asn147, Asn164, Asn168, and Asn189 are each glycosylated (N-linked (GlcNAc...) asparagine; by host). Residues 193–213 traverse the membrane as a helical segment; sequence LALVGVIVFIALIVVCIMGWW.

Belongs to the RL11 family. In terms of assembly, interacts with host FLT3. Post-translationally, highly glycosylated.

The protein resides in the secreted. The protein localises to the host cell membrane. Its function is as follows. Plays a role in modulating the host immune response and affecting host cytokine production. Structurally and functionally homolog of host CEACAM1, induces endothelial cell angiogenesis. Ligands for host FLT3 receptor, activates the PI3K/AKT and MAPK/ERK pathways. In turn, triggers hematopoietic progenitor cell and monocyte differentiation leading to virus reactivation. This chain is CEACAM1-like protein UL7 (UL7), found in Human cytomegalovirus (strain AD169) (HHV-5).